The following is a 244-amino-acid chain: L-xylulose reductase (244 aa).

Residue Met1 is modified to N-acetylmethionine. Position 11-39 (11-39 (LVTGAGKGIGRSIVKALHAAGARVVAVSR)) interacts with NADP(+). The residue at position 21 (Arg21) is an Omega-N-methylarginine. Ser46 is subject to Phosphoserine. Ser136 contacts substrate. Catalysis depends on Tyr149, which acts as the Proton acceptor. Residue Lys153 is part of the active site.

It belongs to the short-chain dehydrogenases/reductases (SDR) family. Homotetramer.

Its subcellular location is the membrane. It carries out the reaction xylitol + NADP(+) = L-xylulose + NADPH + H(+). Functionally, catalyzes the NADPH-dependent reduction of several pentoses, tetroses, trioses, alpha-dicarbonyl compounds and L-xylulose. Participates in the uronate cycle of glucose metabolism. May play a role in the water absorption and cellular osmoregulation in the proximal renal tubules by producing xylitol, an osmolyte, thereby preventing osmolytic stress from occurring in the renal tubules. This chain is L-xylulose reductase (DCXR), found in Bos taurus (Bovine).